The chain runs to 170 residues: Peptide deformylase (170 aa).

Fe cation contacts are provided by Cys94 and His136. Glu137 is an active-site residue. Residue His140 participates in Fe cation binding.

It belongs to the polypeptide deformylase family. Requires Fe(2+) as cofactor.

It catalyses the reaction N-terminal N-formyl-L-methionyl-[peptide] + H2O = N-terminal L-methionyl-[peptide] + formate. Functionally, removes the formyl group from the N-terminal Met of newly synthesized proteins. Requires at least a dipeptide for an efficient rate of reaction. N-terminal L-methionine is a prerequisite for activity but the enzyme has broad specificity at other positions. The sequence is that of Peptide deformylase from Stenotrophomonas maltophilia (strain K279a).